A 505-amino-acid polypeptide reads, in one-letter code: Alkylglycerol monooxygenase (505 aa).

A run of 2 helical transmembrane segments spans residues 56-76 and 104-124; these read VSAWWLVFLTAEFFILFISGH and AVAIFLYVIVWDNWRILELPW. The Fatty acid hydroxylase domain maps to 130–262; it reads WIFCLFFQDF…FIIWDKMFNT (133 aa). A Histidine box-1 motif is present at residues 145-149; sequence HRAVH. The Histidine box-2 motif lies at 158 to 162; it reads HTIHH. Residues 234–238 carry the Histidine box-3 motif; the sequence is HRVHH. A run of 4 helical transmembrane segments spans residues 366–386, 396–416, 430–450, and 452–472; these read ILVKVYVASSFLLLLAIFFHF, LDCTVKIAYFVVTMQCFGAFF, CCGVLIYYGVLMFDHIGAGTH, and LFVISLHIMAIALWTTDVLVE.

It belongs to the sterol desaturase family. TMEM195 subfamily. The cofactor is Fe cation.

The protein localises to the endoplasmic reticulum membrane. The catalysed reaction is 1-O-(1,2-saturated-alkyl)-sn-glycerol + (6R)-L-erythro-5,6,7,8-tetrahydrobiopterin + O2 = a 1-(1-hydroxyalkyl)-sn-glycerol + (6R)-L-erythro-6,7-dihydrobiopterin + H2O. Functionally, glyceryl-ether monooxygenase that cleaves the O-alkyl bond of ether lipids. This chain is Alkylglycerol monooxygenase, found in Caenorhabditis elegans.